The primary structure comprises 282 residues: Acetylglutamate kinase (282 aa).

Residues 62-63 (GG), Arg-84, and Asn-178 each bind substrate. Residues Lys-196, Ser-214, and 266–269 (EIFS) contribute to the L-arginine site.

In terms of assembly, homohexamer.

It localises to the cytoplasm. The enzyme catalyses N-acetyl-L-glutamate + ATP = N-acetyl-L-glutamyl 5-phosphate + ADP. The protein operates within amino-acid biosynthesis; L-arginine biosynthesis; N(2)-acetyl-L-ornithine from L-glutamate: step 2/4. With respect to regulation, allosterically inhibited by arginine. Catalyzes the ATP-dependent phosphorylation of N-acetyl-L-glutamate. The chain is Acetylglutamate kinase from Thermotoga maritima (strain ATCC 43589 / DSM 3109 / JCM 10099 / NBRC 100826 / MSB8).